Consider the following 229-residue polypeptide: 2-C-methyl-D-erythritol 4-phosphate cytidylyltransferase (229 aa).

The protein belongs to the IspD/TarI cytidylyltransferase family. IspD subfamily.

It catalyses the reaction 2-C-methyl-D-erythritol 4-phosphate + CTP + H(+) = 4-CDP-2-C-methyl-D-erythritol + diphosphate. Its pathway is isoprenoid biosynthesis; isopentenyl diphosphate biosynthesis via DXP pathway; isopentenyl diphosphate from 1-deoxy-D-xylulose 5-phosphate: step 2/6. Catalyzes the formation of 4-diphosphocytidyl-2-C-methyl-D-erythritol from CTP and 2-C-methyl-D-erythritol 4-phosphate (MEP). In Clostridium acetobutylicum (strain ATCC 824 / DSM 792 / JCM 1419 / IAM 19013 / LMG 5710 / NBRC 13948 / NRRL B-527 / VKM B-1787 / 2291 / W), this protein is 2-C-methyl-D-erythritol 4-phosphate cytidylyltransferase.